The sequence spans 342 residues: Cathepsin B-like cysteine proteinase 2 (342 aa).

The signal sequence occupies residues 1–18; it reads MKYLVLALCTYLCSQSGA. Residues 19–86 constitute a propeptide, activation peptide; it reads DENAAQGIPL…VKEDPDPEVD (68 aa). N-linked (GlcNAc...) asparagine glycosylation is present at asparagine 99. Intrachain disulfides connect cysteine 100-cysteine 128, cysteine 111-cysteine 156, cysteine 147-cysteine 214, cysteine 148-cysteine 152, cysteine 185-cysteine 218, and cysteine 193-cysteine 205. Cysteine 114 is an active-site residue. Asparagine 138 carries an N-linked (GlcNAc...) asparagine glycan. Asparagine 198 carries an N-linked (GlcNAc...) asparagine glycan. Residue histidine 285 is part of the active site. An N-linked (GlcNAc...) asparagine glycan is attached at asparagine 296. Asparagine 305 is a catalytic residue.

Belongs to the peptidase C1 family.

In terms of biological role, expression of the protease correlates with blood-feeding and suggests a role for the protease in blood digestion. The sequence is that of Cathepsin B-like cysteine proteinase 2 (AC-2) from Haemonchus contortus (Barber pole worm).